Reading from the N-terminus, the 200-residue chain is Protein Mbur_1344 (200 aa).

In terms of domain architecture, AMMECR1 spans 5 to 192 (SEGEQTVRLA…EVEPRGDIEE (188 aa)).

This is Protein Mbur_1344 from Methanococcoides burtonii (strain DSM 6242 / NBRC 107633 / OCM 468 / ACE-M).